Reading from the N-terminus, the 416-residue chain is Enolase (416 aa).

Gln160 serves as a coordination point for (2R)-2-phosphoglycerate. The Proton donor role is filled by Glu204. The Mg(2+) site is built by Asp239, Glu280, and Asp306. 4 residues coordinate (2R)-2-phosphoglycerate: Lys331, Arg360, Ser361, and Lys382. The active-site Proton acceptor is the Lys331.

This sequence belongs to the enolase family. It depends on Mg(2+) as a cofactor.

It localises to the cytoplasm. Its subcellular location is the secreted. It is found in the cell surface. It carries out the reaction (2R)-2-phosphoglycerate = phosphoenolpyruvate + H2O. It functions in the pathway carbohydrate degradation; glycolysis; pyruvate from D-glyceraldehyde 3-phosphate: step 4/5. Functionally, catalyzes the reversible conversion of 2-phosphoglycerate (2-PG) into phosphoenolpyruvate (PEP). It is essential for the degradation of carbohydrates via glycolysis. The polypeptide is Enolase (Sulfurisphaera tokodaii (strain DSM 16993 / JCM 10545 / NBRC 100140 / 7) (Sulfolobus tokodaii)).